Reading from the N-terminus, the 394-residue chain is Elongation factor Tu (394 aa).

The 195-residue stretch at 10–204 folds into the tr-type G domain; the sequence is KPHVNVGTIG…AMDDYIPAPE (195 aa). A G1 region spans residues 19-26; that stretch reads GHVDHGKT. 19 to 26 is a binding site for GTP; the sequence is GHVDHGKT. Thr26 is a Mg(2+) binding site. Residues 60–64 are G2; it reads GITIN. The tract at residues 81–84 is G3; it reads DCPG. GTP-binding positions include 81–85 and 136–139; these read DCPGH and NKCD. A G4 region spans residues 136–139; the sequence is NKCD. A G5 region spans residues 174–176; that stretch reads SAL.

It belongs to the TRAFAC class translation factor GTPase superfamily. Classic translation factor GTPase family. EF-Tu/EF-1A subfamily. In terms of assembly, monomer.

It is found in the cytoplasm. The enzyme catalyses GTP + H2O = GDP + phosphate + H(+). In terms of biological role, GTP hydrolase that promotes the GTP-dependent binding of aminoacyl-tRNA to the A-site of ribosomes during protein biosynthesis. This chain is Elongation factor Tu, found in Francisella tularensis subsp. tularensis (strain FSC 198).